A 296-amino-acid chain; its full sequence is Nitrogenase iron protein 1 (296 aa).

11 to 18 (GKGGIGKS) contributes to the ATP binding site. Cysteine 99 provides a ligand contact to [4Fe-4S] cluster. An ADP-ribosylarginine; by dinitrogenase reductase ADP-ribosyltransferase modification is found at arginine 102. Cysteine 133 contacts [4Fe-4S] cluster.

The protein belongs to the NifH/BchL/ChlL family. As to quaternary structure, homodimer. The cofactor is [4Fe-4S] cluster. Post-translationally, the reversible ADP-ribosylation of Arg-102 inactivates the nitrogenase reductase and regulates nitrogenase activity.

The catalysed reaction is N2 + 8 reduced [2Fe-2S]-[ferredoxin] + 16 ATP + 16 H2O = H2 + 8 oxidized [2Fe-2S]-[ferredoxin] + 2 NH4(+) + 16 ADP + 16 phosphate + 6 H(+). The key enzymatic reactions in nitrogen fixation are catalyzed by the nitrogenase complex, which has 2 components: the iron protein and the molybdenum-iron protein. The sequence is that of Nitrogenase iron protein 1 (nifH1) from Azorhizobium caulinodans (strain ATCC 43989 / DSM 5975 / JCM 20966 / LMG 6465 / NBRC 14845 / NCIMB 13405 / ORS 571).